The primary structure comprises 583 residues: Lipoprotein LpqB (583 aa).

Positions 1 to 29 are cleaved as a signal peptide; that stretch reads MSNKTTEATKTTKVKKVLSVVAGLGLLAG. A lipid anchor (N-palmitoyl cysteine) is attached at Cys30. Cys30 carries S-diacylglycerol cysteine lipidation. The segment at 38 to 63 is disordered; sequence NPEAISSYAPAPSGQEAPTPTDGQPS.

Belongs to the LpqB lipoprotein family.

It is found in the cell membrane. The polypeptide is Lipoprotein LpqB (Corynebacterium jeikeium (strain K411)).